Reading from the N-terminus, the 626-residue chain is Lysine--tRNA ligase, cytoplasmic (626 aa).

Methionine 1 carries the post-translational modification N-acetylmethionine. Polar residues-rich tracts occupy residues 1-11 (MEGAADQTTKA) and 18-27 (DSSTTLNAAE). The tract at residues 1 to 84 (MEGAADQTTK…QKAVAADDEE (84 aa)) is disordered. The stretch at 37-69 (RSKNALKKEQKMKQKEEEKRRKDEEKAEKAKQA) forms a coiled coil. A compositionally biased stretch (basic and acidic residues) spans 42–67 (LKKEQKMKQKEEEKRRKDEEKAEKAK). Low complexity predominate over residues 69–78 (APKASSQKAV). A DNA-binding region (OB) is located at residues 141–217 (SLAGRIMSKR…RGELSIFPRS (77 aa)). Residues glycine 313 and glutamate 337 each contribute to the substrate site. ATP-binding positions include 359 to 361 (RNE) and 367 to 368 (HN). Substrate contacts are provided by glutamate 375 and tyrosine 377. Ca(2+)-binding residues include glutamate 521 and glutamate 528. An ATP-binding site is contributed by 528–529 (EL). Residues asparagine 531 and glutamate 535 each contribute to the substrate site. 584–587 (GIDR) is an ATP binding site.

It belongs to the class-II aminoacyl-tRNA synthetase family. It depends on Ca(2+) as a cofactor.

It is found in the cytoplasm. Its subcellular location is the cytosol. The catalysed reaction is tRNA(Lys) + L-lysine + ATP = L-lysyl-tRNA(Lys) + AMP + diphosphate. Catalyzes the specific attachment of an amino acid to its cognate tRNA in a 2 step reaction: the amino acid (AA) is first activated by ATP to form AA-AMP and then transferred to the acceptor end of the tRNA. Promotes aminoacylation of non-cognate tRNAs and translational recoding of lysine at nonsense codons. This chain is Lysine--tRNA ligase, cytoplasmic, found in Arabidopsis thaliana (Mouse-ear cress).